The following is a 390-amino-acid chain: 8-amino-7-oxononanoate synthase (390 aa).

Arginine 22 serves as a coordination point for substrate. 109–110 is a pyridoxal 5'-phosphate binding site; it reads GY. Substrate is bound at residue histidine 134. 3 residues coordinate pyridoxal 5'-phosphate: serine 180, histidine 208, and threonine 236. N6-(pyridoxal phosphate)lysine is present on lysine 239. Substrate is bound at residue threonine 353.

This sequence belongs to the class-II pyridoxal-phosphate-dependent aminotransferase family. BioF subfamily. As to quaternary structure, homodimer. Requires pyridoxal 5'-phosphate as cofactor.

It catalyses the reaction 6-carboxyhexanoyl-[ACP] + L-alanine + H(+) = (8S)-8-amino-7-oxononanoate + holo-[ACP] + CO2. Its pathway is cofactor biosynthesis; biotin biosynthesis. Its function is as follows. Catalyzes the decarboxylative condensation of pimeloyl-[acyl-carrier protein] and L-alanine to produce 8-amino-7-oxononanoate (AON), [acyl-carrier protein], and carbon dioxide. This chain is 8-amino-7-oxononanoate synthase, found in Azoarcus sp. (strain BH72).